A 185-amino-acid polypeptide reads, in one-letter code: Ribosome-recycling factor (185 aa).

This sequence belongs to the RRF family.

Its subcellular location is the cytoplasm. In terms of biological role, responsible for the release of ribosomes from messenger RNA at the termination of protein biosynthesis. May increase the efficiency of translation by recycling ribosomes from one round of translation to another. The protein is Ribosome-recycling factor of Shewanella oneidensis (strain ATCC 700550 / JCM 31522 / CIP 106686 / LMG 19005 / NCIMB 14063 / MR-1).